Here is a 59-residue protein sequence, read N- to C-terminus: Large ribosomal subunit protein uL30 (59 aa).

It belongs to the universal ribosomal protein uL30 family. In terms of assembly, part of the 50S ribosomal subunit.

The sequence is that of Large ribosomal subunit protein uL30 from Alkaliphilus oremlandii (strain OhILAs) (Clostridium oremlandii (strain OhILAs)).